Reading from the N-terminus, the 167-residue chain is uncharacterized protein (167 aa).

Belongs to the A.longa ORF167/ORF288 family.

The protein localises to the plastid. This is an uncharacterized protein from Euglena longa (Euglenophycean alga).